The sequence spans 387 residues: Phosphoglycerate kinase (387 aa).

Residues 21-23 (DLN), R36, 59-62 (HLGR), R113, and R146 each bind substrate. Residues K197, E314, and 340–343 (GGDT) contribute to the ATP site.

The protein belongs to the phosphoglycerate kinase family. As to quaternary structure, monomer.

The protein localises to the cytoplasm. The enzyme catalyses (2R)-3-phosphoglycerate + ATP = (2R)-3-phospho-glyceroyl phosphate + ADP. Its pathway is carbohydrate degradation; glycolysis; pyruvate from D-glyceraldehyde 3-phosphate: step 2/5. The protein is Phosphoglycerate kinase of Pseudomonas syringae pv. syringae (strain B728a).